The primary structure comprises 206 residues: Ras-related protein RABG3c (206 aa).

G15 to T22 serves as a coordination point for GTP. Positions Y37–F45 match the Effector region motif. GTP-binding positions include D63–Q67, N125–D128, and S158–A159. 2 S-geranylgeranyl cysteine lipidation sites follow: C204 and C206. The residue at position 206 (C206) is a Cysteine methyl ester.

It belongs to the small GTPase superfamily. Rab family.

The protein resides in the cell membrane. Its function is as follows. Intracellular vesicle trafficking and protein transport. The polypeptide is Ras-related protein RABG3c (RABG3C) (Arabidopsis thaliana (Mouse-ear cress)).